We begin with the raw amino-acid sequence, 327 residues long: Ribose 1,5-bisphosphate isomerase (327 aa).

Residues 25–28 (RGAA) and arginine 68 each bind substrate. Catalysis depends on cysteine 133, which acts as the Proton acceptor. Aspartate 202 functions as the Proton donor in the catalytic mechanism. Substrate contacts are provided by residues 212 to 213 (NK) and lysine 238.

Belongs to the eIF-2B alpha/beta/delta subunits family. R15P isomerase subfamily.

The enzyme catalyses alpha-D-ribose 1,5-bisphosphate = D-ribulose 1,5-bisphosphate. Isomerase involved in the non-carboxylating pentose bisphosphate pathway, a nucleoside degradation pathway present in some halophilic archaea. Catalyzes the isomerization of ribose 1,5-bisphosphate (R15P) to ribulose 1,5-bisphosphate (RuBP). This Haloterrigena turkmenica (strain ATCC 51198 / DSM 5511 / JCM 9101 / NCIMB 13204 / VKM B-1734 / 4k) (Halococcus turkmenicus) protein is Ribose 1,5-bisphosphate isomerase.